A 3032-amino-acid polypeptide reads, in one-letter code: Biorientation of chromosomes in cell division protein 1-like 1 (3032 aa).

Residues 1 to 31 (MATNPQPQPPPPAPPPPPPQPQPPPPPPGPG) are compositionally biased toward pro residues. 4 disordered regions span residues 1-48 (MATN…GAGD), 164-195 (EEAA…SANV), 214-397 (NAAR…LDSD), and 409-465 (VHTS…RGVR). Positions 32–46 (AGPGASGPGSAGAGA) are enriched in gly residues. Polar residues predominate over residues 234–243 (KLSSQPSTDV). Positions 244–261 (STDKERGSEDATEREKAT) are enriched in basic and acidic residues. Ser264 carries the phosphoserine modification. Over residues 310–391 (TDPKIKSMDK…RAAEGTKEDC (82 aa)) the composition is skewed to basic and acidic residues. The segment covering 416 to 441 (SFEEDTEEEVVVSESMEEGEITSEDE) has biased composition (acidic residues). Lys471 carries the post-translational modification N6-acetyllysine. Residues Ser480 and Ser482 each carry the phosphoserine modification. 7 disordered regions span residues 480–1153 (SDSD…HKAT), 1165–1296 (MVDS…HNSN), 1309–1366 (GGRA…LSED), 1424–1491 (AAGE…SGRR), 1675–1701 (GSLS…TEGT), 1740–1858 (AKPQ…GHAS), and 1934–1978 (ALAG…ISTG). Basic and acidic residues-rich tracts occupy residues 488 to 503 (VEQR…EERL) and 510 to 525 (REKL…EKTK). The residue at position 534 (Lys534) is an N6-acetyllysine. Composition is skewed to basic and acidic residues over residues 547–568 (LEPK…EKKV) and 578–653 (SRNV…EYKR). Ser632 and Ser656 each carry phosphoserine. The residue at position 657 (Thr657) is a Phosphothreonine. Basic and acidic residues-rich tracts occupy residues 668-736 (TDTR…DKPS), 743-768 (GDSV…ESVR), and 799-846 (RDGK…KLQK). Residues 848 to 859 (ALSSKQHSVTSQ) show a composition bias toward polar residues. 4 stretches are compositionally biased toward basic and acidic residues: residues 860 to 872 (KRSE…KCET), 934 to 960 (KPDK…RTSE), 978 to 1015 (AQKD…DGHR), and 1022 to 1069 (SNKD…ENRR). Position 1071 is a phosphoserine (Ser1071). Polar residues predominate over residues 1086 to 1096 (MSGTTSSSSLQ). Ser1138 carries the phosphoserine modification. A compositionally biased stretch (low complexity) spans 1272 to 1286 (STDSDLLSSSGSVTV). A compositionally biased stretch (polar residues) spans 1312-1329 (ASTSLANHSDVPNQYSTV). 2 positions are modified to phosphoserine: Ser1315 and Ser1364. Composition is skewed to basic and acidic residues over residues 1428–1470 (HVVD…RRDS) and 1479–1491 (GKME…SGRR). Residues Ser1676 and Ser1685 each carry the phosphoserine modification. The span at 1958–1970 (HHSDSQLTRKETV) shows a compositional bias: basic and acidic residues. Residues Ser1989, Ser2001, Ser2092, and Ser2166 each carry the phosphoserine modification. Positions 2082–2101 (PMPSAVSGENSQLTASRSEE) are disordered. The span at 2088 to 2097 (SGENSQLTAS) shows a compositional bias: polar residues. Disordered stretches follow at residues 2303-2322 (EENQ…LATK), 2370-2469 (EPSV…HCLT), 2536-2559 (EGGL…EKMG), and 2575-2596 (DVTL…PPKG). 2 positions are modified to phosphoserine: Ser2417 and Ser2443. A compositionally biased stretch (basic and acidic residues) spans 2449 to 2459 (CLREPEQKPAE). Phosphoserine is present on Ser2554. At Ser2681 the chain carries Phosphoserine. The interval 2682–3032 (TEALSGCSVE…DENPLKKAKR (351 aa)) is disordered. Composition is skewed to acidic residues over residues 2692-2701 (ADPEEVEEEE) and 2715-2725 (SSEEELDDSPD). The segment covering 2727–2750 (LDSRIETAQRQYSETEPHDTKEEN) has biased composition (basic and acidic residues). The span at 2758 to 2769 (SSVTSKTNSSTG) shows a compositional bias: polar residues. A compositionally biased stretch (basic and acidic residues) spans 2782 to 2804 (TGEKTEPNEDDGSIKSQEDDHPI). The span at 2805–2815 (IIKRRRGRPRK) shows a compositional bias: basic residues. The segment at residues 2807 to 2819 (KRRRGRPRKYPAE) is a DNA-binding region (a.T hook). Residues 2822 to 2832 (FKSKEDSKTET) are compositionally biased toward basic and acidic residues. Residues 2833 to 2843 (DITTVEQSSPS) show a composition bias toward polar residues. Phosphoserine is present on residues Ser2840 and Ser2841. A compositionally biased stretch (basic and acidic residues) spans 2853–2867 (ESNKEIANLEEKSTS). Residue Ser2888 is modified to Phosphoserine. Position 2890 is a phosphothreonine (Thr2890). Phosphoserine occurs at positions 2892, 2898, and 2907. Residues Lys2915 and Lys2916 each participate in a glycyl lysine isopeptide (Lys-Gly) (interchain with G-Cter in ubiquitin) cross-link. Residues 2919–2932 (ESDEEEEEEEEEEP) are compositionally biased toward acidic residues. At Ser2920 the chain carries Phosphoserine. The span at 2975 to 2987 (LAKEKLSTSEKVS) shows a compositional bias: basic and acidic residues. Position 3000 is a phosphoserine (Ser3000). The segment covering 3020-3032 (QKVDENPLKKAKR) has biased composition (basic and acidic residues).

Belongs to the BOD1 family. Interacts (via COMPASS-Shg1 domain) with SETD1A at stalled replication forks; this interaction mediates FANCD2-dependent nucleosome remodeling at reversed forks protecting them from nucleolytic degradation.

Its subcellular location is the chromosome. Its function is as follows. Component of the fork protection machinery required to protect stalled/damaged replication forks from uncontrolled DNA2-dependent resection. Acts by stabilizing RAD51 at stalled replication forks and protecting RAD51 nucleofilaments from the antirecombinogenic activities of FBH1 and BLM. Does not regulate spindle orientation. This chain is Biorientation of chromosomes in cell division protein 1-like 1, found in Mus musculus (Mouse).